The following is a 754-amino-acid chain: Fibronectin type III domain-containing protein 1 (754 aa).

The signal sequence occupies residues 1-19 (MKSWISISFLCMLFPLSNG). 3 disordered regions span residues 40-61 (SLQG…SQGG), 85-106 (AQIS…TQFS), and 130-163 (AQHS…AQSG). Positions 130 to 161 (AQHSQAGAQGSQFPQSAAHTAQHHQGTAQPAQ) are enriched in low complexity. Fibronectin type-III domains lie at 250–355 (PPQS…TPDL), 359–449 (APLN…TDKF), 453–545 (APRN…TKMD), 549–642 (EPMS…LPKP), and 645–742 (LVPN…SFPG). Residues 731–754 (SNLSSQQFSFPGQQVGQQQSNPWI) form a disordered region.

As to expression, prismatic layer of shell (at protein level). Expressed primarily in the mantle with highest level in the outer epithelium of the mantle edge and lower level in the mantle pallium.

Its subcellular location is the secreted. In Margaritifera margaritifera (Freshwater pearl mussel), this protein is Fibronectin type III domain-containing protein 1.